We begin with the raw amino-acid sequence, 253 residues long: Hydroxyacylglutathione hydrolase (253 aa).

The Zn(2+) site is built by H54, H56, D58, H59, H112, D131, and H169.

Belongs to the metallo-beta-lactamase superfamily. Glyoxalase II family. As to quaternary structure, monomer. It depends on Zn(2+) as a cofactor.

The enzyme catalyses an S-(2-hydroxyacyl)glutathione + H2O = a 2-hydroxy carboxylate + glutathione + H(+). The protein operates within secondary metabolite metabolism; methylglyoxal degradation; (R)-lactate from methylglyoxal: step 2/2. Its function is as follows. Thiolesterase that catalyzes the hydrolysis of S-D-lactoyl-glutathione to form glutathione and D-lactic acid. The chain is Hydroxyacylglutathione hydrolase from Bartonella tribocorum (strain CIP 105476 / IBS 506).